Here is a 196-residue protein sequence, read N- to C-terminus: HTH-type transcriptional regulator BetI (196 aa).

Residues 8–68 enclose the HTH tetR-type domain; sequence EVRRAQLIDA…ATMRHILRDL (61 aa). The segment at residues 31-50 is a DNA-binding region (H-T-H motif); it reads TLASVAQRANISTGIVSHYF.

It participates in amine and polyamine biosynthesis; betaine biosynthesis via choline pathway [regulation]. Its function is as follows. Repressor involved in the biosynthesis of the osmoprotectant glycine betaine. It represses transcription of the choline transporter BetT and the genes of BetAB involved in the synthesis of glycine betaine. The chain is HTH-type transcriptional regulator BetI from Paraburkholderia phymatum (strain DSM 17167 / CIP 108236 / LMG 21445 / STM815) (Burkholderia phymatum).